The primary structure comprises 264 residues: NAD-capped RNA hydrolase NudC (264 aa).

2 residues coordinate Zn(2+): Cys99 and Cys102. Glu112 lines the substrate pocket. Zn(2+) is bound by residues Cys117 and Cys120. A substrate-binding site is contributed by Tyr125. Positions 126 to 253 (PVICPSIIVA…TIARKLIHAT (128 aa)) constitute a Nudix hydrolase domain. A divalent metal cation-binding residues include Ala162, Glu178, and Glu182. Residues 163 to 184 (GFVEVGETFEQAVQREVFEETG) carry the Nudix box motif. 196–203 (QPWAFPNS) contributes to the substrate binding site. Glu223 serves as a coordination point for a divalent metal cation. Ala246 lines the substrate pocket.

Belongs to the Nudix hydrolase family. NudC subfamily. As to quaternary structure, homodimer. The cofactor is Mg(2+). Mn(2+) is required as a cofactor. It depends on Zn(2+) as a cofactor.

The catalysed reaction is a 5'-end NAD(+)-phospho-ribonucleoside in mRNA + H2O = a 5'-end phospho-adenosine-phospho-ribonucleoside in mRNA + beta-nicotinamide D-ribonucleotide + 2 H(+). The enzyme catalyses NAD(+) + H2O = beta-nicotinamide D-ribonucleotide + AMP + 2 H(+). It catalyses the reaction NADH + H2O = reduced beta-nicotinamide D-ribonucleotide + AMP + 2 H(+). Its function is as follows. mRNA decapping enzyme that specifically removes the nicotinamide adenine dinucleotide (NAD) cap from a subset of mRNAs by hydrolyzing the diphosphate linkage to produce nicotinamide mononucleotide (NMN) and 5' monophosphate mRNA. The NAD-cap is present at the 5'-end of some mRNAs and stabilizes RNA against 5'-processing. Has preference for mRNAs with a 5'-end purine. Catalyzes the hydrolysis of a broad range of dinucleotide pyrophosphates. The sequence is that of NAD-capped RNA hydrolase NudC from Haemophilus influenzae (strain PittGG).